A 104-amino-acid polypeptide reads, in one-letter code: Probable guanidinium efflux system subunit GdnD (104 aa).

A run of 4 helical transmembrane segments spans residues 3-23 (WICL…MNQF), 31-51 (WIFL…LAME), 58-78 (AYAV…ILFY), and 84-104 (GKRI…KLIS).

Belongs to the drug/metabolite transporter (DMT) superfamily. Small multidrug resistance (SMR) (TC 2.A.7.1) family. YkkC/YkkD subfamily. In terms of assembly, the efflux pump is composed of GdnC and GdnD.

It localises to the cell membrane. Functionally, probably involved in guanidinium transport. The protein is Probable guanidinium efflux system subunit GdnD of Bacillus licheniformis (strain ATCC 14580 / DSM 13 / JCM 2505 / CCUG 7422 / NBRC 12200 / NCIMB 9375 / NCTC 10341 / NRRL NRS-1264 / Gibson 46).